We begin with the raw amino-acid sequence, 36 residues long: Pancreatic polypeptide (36 aa).

Position 36 is a tyrosine amide (Tyr36).

The protein belongs to the NPY family.

It is found in the secreted. Its function is as follows. Hormone secreted by pancreatic cells that acts as a regulator of pancreatic and gastrointestinal functions probably by signaling through the G protein-coupled receptor NPY4R2. This chain is Pancreatic polypeptide (PPY), found in Ceratotherium simum (White rhinoceros).